The following is a 445-amino-acid chain: UPF0761 membrane protein Mlg_0521 (445 aa).

6 consecutive transmembrane segments (helical) span residues 56–76, 112–132, 152–172, 195–215, 225–245, and 259–279; these read LLAL…FPVF, GLTV…MAAI, FMVY…SLGI, LLAG…YAAV, ALLG…GFGW, and ALAA…VVLV.

This sequence belongs to the UPF0761 family.

It is found in the cell inner membrane. The chain is UPF0761 membrane protein Mlg_0521 from Alkalilimnicola ehrlichii (strain ATCC BAA-1101 / DSM 17681 / MLHE-1).